A 441-amino-acid chain; its full sequence is Fibroleukin (441 aa).

Residues methionine 1–alanine 15 form the signal peptide. N-linked (GlcNAc...) asparagine glycosylation occurs at asparagine 25. Residues serine 73–asparagine 167 adopt a coiled-coil conformation. The tract at residues glutamine 102 to asparagine 128 is disordered. N-linked (GlcNAc...) asparagine glycosylation is found at asparagine 179, asparagine 237, asparagine 265, and asparagine 338. Residues valine 206–histidine 438 enclose the Fibrinogen C-terminal domain.

As to quaternary structure, homotetramer; disulfide-linked.

It is found in the secreted. Its function is as follows. May play a role in physiologic lymphocyte functions at mucosal sites. The protein is Fibroleukin (FGL2) of Bos taurus (Bovine).